A 198-amino-acid polypeptide reads, in one-letter code: Alpha1-proteinase inhibitor-degradation deficient protein 37 (198 aa).

Ser79 carries the phosphoserine modification.

It localises to the cytoplasm. Its function is as follows. Involved in ER-associated protein degradation (ERAD). The polypeptide is Alpha1-proteinase inhibitor-degradation deficient protein 37 (ADD37) (Saccharomyces cerevisiae (strain ATCC 204508 / S288c) (Baker's yeast)).